The following is a 69-amino-acid chain: Probable molybdenum-pterin-binding protein (69 aa).

Positions 2 to 68 (KISARNQLKG…IKATSVMVGV (67 aa)) constitute a Mop domain.

This sequence to C.pasteurianum MOP proteins.

Binds one mole of molybdenum per mole of protein and contains a pterin. The chain is Probable molybdenum-pterin-binding protein from Haemophilus influenzae (strain ATCC 51907 / DSM 11121 / KW20 / Rd).